A 556-amino-acid polypeptide reads, in one-letter code: DNA ligase B (556 aa).

Catalysis depends on lysine 122, which acts as the N6-AMP-lysine intermediate.

Belongs to the NAD-dependent DNA ligase family. LigB subfamily.

The catalysed reaction is NAD(+) + (deoxyribonucleotide)n-3'-hydroxyl + 5'-phospho-(deoxyribonucleotide)m = (deoxyribonucleotide)n+m + AMP + beta-nicotinamide D-nucleotide.. In terms of biological role, catalyzes the formation of phosphodiester linkages between 5'-phosphoryl and 3'-hydroxyl groups in double-stranded DNA using NAD as a coenzyme and as the energy source for the reaction. This chain is DNA ligase B, found in Enterobacter sp. (strain 638).